The sequence spans 629 residues: Flap endonuclease GEN-like 1 (629 aa).

Residues 1–87 are N-domain; the sequence is MGVGGSFWDL…DGQPSPLKSQ (87 aa). The segment at 2 to 98 is XPG-N domain; it reads GVGGSFWDLL…RAARFFRGSG (97 aa). The Mg(2+) site is built by Asp31, Asp78, Glu148, Glu150, Asp169, Asp171, and Asp221. The segment at 136–221 is XPG-I domain; sequence EYLGMPVLRA…VAMALLVGSD (86 aa). Residues 136-225 form an I-domain region; it reads EYLGMPVLRA…LLVGSDHDLH (90 aa). Positions 221 to 421 are 5'-3' exonuclease domain; sequence DHDLHGVPGF…MLPMLSTIYL (201 aa). Residues 594–617 are disordered; the sequence is KKGLSGDSGKDGSRKSSDVDLSKN. Residues 601–614 show a composition bias toward basic and acidic residues; the sequence is SGKDGSRKSSDVDL.

Belongs to the XPG/RAD2 endonuclease family. GEN subfamily. As to quaternary structure, monomer. Interacts with PCNA. PCNA stimulates the nuclease activity without altering cleavage specificity. The cofactor is Mg(2+). As to expression, highly expressed in anthers. Expressed in roots and leaves.

Its subcellular location is the nucleus. Endonuclease which cleaves flap structures at the junction between single-stranded DNA and double-stranded DNA. Possesses both single-stranded and double-stranded DNA-binding activities. Involved in early microspore development, but does not alter meiosis or tapetal cells development. Possesses Holliday junction (HJ) resolvase activity in vitro. Cleaves HJ at symmetrically related sites of the branch point. This chain is Flap endonuclease GEN-like 1, found in Oryza sativa subsp. japonica (Rice).